We begin with the raw amino-acid sequence, 136 residues long: C-type natriuretic peptide prohormone (136 aa).

Positions 1–21 (MSGQTSFYCGLLLVLLIQAQA) are cleaved as a signal peptide. A disulfide bond links C120 and C136.

The protein belongs to the natriuretic peptide family. CNP-115 is differentially processed to produce CNP-38 and CNP-39 in the heart and CNP-22 in the brain.

The protein localises to the secreted. Functionally, hormone which may be vasoactive and natriuretic. Has a cGMP-stimulating activity. This Triakis scyllium (Banded houndshark) protein is C-type natriuretic peptide prohormone.